A 520-amino-acid chain; its full sequence is 2-isopropylmalate synthase (520 aa).

The Pyruvate carboxyltransferase domain occupies 5-267 (VIIFDTTLRD…HTNINHQEIY (263 aa)). Aspartate 14, histidine 202, histidine 204, and asparagine 238 together coordinate Mn(2+). Residues 392-520 (RLDYFSVQSG…RLQQNNQEMV (129 aa)) are regulatory domain.

This sequence belongs to the alpha-IPM synthase/homocitrate synthase family. LeuA type 1 subfamily. As to quaternary structure, homodimer. Mn(2+) serves as cofactor.

Its subcellular location is the cytoplasm. The enzyme catalyses 3-methyl-2-oxobutanoate + acetyl-CoA + H2O = (2S)-2-isopropylmalate + CoA + H(+). Its pathway is amino-acid biosynthesis; L-leucine biosynthesis; L-leucine from 3-methyl-2-oxobutanoate: step 1/4. Catalyzes the condensation of the acetyl group of acetyl-CoA with 3-methyl-2-oxobutanoate (2-ketoisovalerate) to form 3-carboxy-3-hydroxy-4-methylpentanoate (2-isopropylmalate). The polypeptide is 2-isopropylmalate synthase (Yersinia pseudotuberculosis serotype O:1b (strain IP 31758)).